A 454-amino-acid polypeptide reads, in one-letter code: tRNA modification GTPase MnmE (454 aa).

Positions 23, 80, and 120 each coordinate (6S)-5-formyl-5,6,7,8-tetrahydrofolate. Residues 216 to 377 (GMKVVIAGRP…LRSHLKEAMG (162 aa)) enclose the TrmE-type G domain. Asn-226 is a binding site for K(+). GTP contacts are provided by residues 226-231 (NAGKSS), 245-251 (TDIAGTT), 270-273 (DTAG), and 358-360 (SAR). Mg(2+) is bound at residue Ser-230. Residues Thr-245, Ile-247, and Thr-250 each coordinate K(+). Thr-251 serves as a coordination point for Mg(2+). Position 454 (Lys-454) interacts with (6S)-5-formyl-5,6,7,8-tetrahydrofolate.

This sequence belongs to the TRAFAC class TrmE-Era-EngA-EngB-Septin-like GTPase superfamily. TrmE GTPase family. As to quaternary structure, homodimer. Heterotetramer of two MnmE and two MnmG subunits. The cofactor is K(+).

The protein localises to the cytoplasm. Its function is as follows. Exhibits a very high intrinsic GTPase hydrolysis rate. Involved in the addition of a carboxymethylaminomethyl (cmnm) group at the wobble position (U34) of certain tRNAs, forming tRNA-cmnm(5)s(2)U34. In Proteus mirabilis (strain HI4320), this protein is tRNA modification GTPase MnmE.